The primary structure comprises 185 residues: Lipid A acyltransferase PagP (185 aa).

Positions 1 to 24 are cleaved as a signal peptide; it reads MKTHNDILAALAALPLFLTGAAFA. Residues histidine 57, aspartate 100, and serine 101 contribute to the active site.

This sequence belongs to the lipid A palmitoyltransferase family. Homodimer.

The protein resides in the cell outer membrane. It catalyses the reaction a lipid A + a 1,2-diacyl-sn-glycero-3-phosphocholine = a hepta-acyl lipid A + a 2-acyl-sn-glycero-3-phosphocholine. It carries out the reaction a lipid IVA + a 1,2-diacyl-sn-glycero-3-phosphocholine = a lipid IVB + a 2-acyl-sn-glycero-3-phosphocholine. The enzyme catalyses a lipid IIA + a 1,2-diacyl-sn-glycero-3-phosphocholine = a lipid IIB + a 2-acyl-sn-glycero-3-phosphocholine. Functionally, transfers a fatty acid residue from the sn-1 position of a phospholipid to the N-linked hydroxyfatty acid chain on the proximal unit of lipid A or its precursors. In Edwardsiella tarda (strain FL6-60), this protein is Lipid A acyltransferase PagP.